Consider the following 264-residue polypeptide: Thymidylate synthase (264 aa).

R21 contributes to the dUMP binding site. H51 contacts (6R)-5,10-methylene-5,6,7,8-tetrahydrofolate. 126 to 127 (RR) provides a ligand contact to dUMP. C146 functions as the Nucleophile in the catalytic mechanism. Residues 166 to 169 (RSCD), N177, and 207 to 209 (HLY) each bind dUMP. D169 is a (6R)-5,10-methylene-5,6,7,8-tetrahydrofolate binding site. Position 263 (A263) interacts with (6R)-5,10-methylene-5,6,7,8-tetrahydrofolate.

It belongs to the thymidylate synthase family. Bacterial-type ThyA subfamily. In terms of assembly, homodimer.

The protein localises to the cytoplasm. The catalysed reaction is dUMP + (6R)-5,10-methylene-5,6,7,8-tetrahydrofolate = 7,8-dihydrofolate + dTMP. The protein operates within pyrimidine metabolism; dTTP biosynthesis. Its function is as follows. Catalyzes the reductive methylation of 2'-deoxyuridine-5'-monophosphate (dUMP) to 2'-deoxythymidine-5'-monophosphate (dTMP) while utilizing 5,10-methylenetetrahydrofolate (mTHF) as the methyl donor and reductant in the reaction, yielding dihydrofolate (DHF) as a by-product. This enzymatic reaction provides an intracellular de novo source of dTMP, an essential precursor for DNA biosynthesis. The protein is Thymidylate synthase of Salmonella typhimurium (strain LT2 / SGSC1412 / ATCC 700720).